Here is a 343-residue protein sequence, read N- to C-terminus: GTPase Obg (343 aa).

Positions 1–159 (MKYIDEVKIQ…FELKLELRVL (159 aa)) constitute an Obg domain. Positions 160-334 (ADVGLLGLPN…LTYAIMGYLE (175 aa)) constitute an OBG-type G domain. GTP-binding positions include 166 to 173 (GLPNAGKS), 191 to 195 (FTTLY), 213 to 216 (DIPG), 284 to 287 (NKVD), and 315 to 317 (SAL). Residues S173 and T193 each coordinate Mg(2+).

The protein belongs to the TRAFAC class OBG-HflX-like GTPase superfamily. OBG GTPase family. In terms of assembly, monomer. Mg(2+) is required as a cofactor.

It localises to the cytoplasm. Functionally, an essential GTPase which binds GTP, GDP and possibly (p)ppGpp with moderate affinity, with high nucleotide exchange rates and a fairly low GTP hydrolysis rate. Plays a role in control of the cell cycle, stress response, ribosome biogenesis and in those bacteria that undergo differentiation, in morphogenesis control. The chain is GTPase Obg from Nitrosomonas eutropha (strain DSM 101675 / C91 / Nm57).